The sequence spans 366 residues: 3-dehydroquinate synthase (366 aa).

NAD(+)-binding positions include Asp-69 to Lys-74, Gly-103 to Asp-107, Thr-127 to Thr-128, Lys-140, and Lys-149. Zn(2+) is bound by residues Glu-182, His-245, and His-262.

This sequence belongs to the sugar phosphate cyclases superfamily. Dehydroquinate synthase family. It depends on Co(2+) as a cofactor. Zn(2+) serves as cofactor. NAD(+) is required as a cofactor.

It is found in the cytoplasm. The catalysed reaction is 7-phospho-2-dehydro-3-deoxy-D-arabino-heptonate = 3-dehydroquinate + phosphate. It functions in the pathway metabolic intermediate biosynthesis; chorismate biosynthesis; chorismate from D-erythrose 4-phosphate and phosphoenolpyruvate: step 2/7. In terms of biological role, catalyzes the conversion of 3-deoxy-D-arabino-heptulosonate 7-phosphate (DAHP) to dehydroquinate (DHQ). This Pseudomonas fluorescens (strain Pf0-1) protein is 3-dehydroquinate synthase.